Reading from the N-terminus, the 570-residue chain is MPINYNRNAVELKLSSQLLQWLDQRLPLGDPMRIPSIDSYKYIQDLGKGRFGTVCKFSNGNTFETVKKVDLTIFNHWTQSETKVSNRLDTFLYEFRHLHKVTNDNNRIVNFLGIYADSNQMYIMSEYLPRGSVKDLLVKETLGEDTAIKYLMETVEALDYLHNLSPPVIHRDIKAANLLITSNDSIKLANFGLVRDLAVDGFGIAIASEITLDFRATLLYVAPEVLSSALGPGNRNAYELPADIWALGCTFIEMLLKRPPHFEYFGHIDEIPKVLLGYAKSEDGKVLPYTSEVLVPSSSNCVQKIVDLVFIKSPEHRPNTHKLRIQIKKILDDDSESEEETDISHPISNSNTDSSTAISHNHSNDRKVGRAGTCLPIESMEYAAVRKELKKRSKPKSNNIMQIFVASGYYLSRILYFLNILTRSICYLLLFLSLGITALGSFLLISYFVVRFVRYLIAINCNCDLMQPQYLIISGILIVLMFALLFSCCMVALGEYKFRMANQTLDGSKFYLPRPQKSAVLCGITVITGKEDAKDTAQNMEEEIHLTPSVRRNHDDYYYDESSGPANEEN.

The Protein kinase domain occupies 40 to 331 (YKYIQDLGKG…KLRIQIKKIL (292 aa)). ATP-binding positions include 46-54 (LGKGRFGTV) and lysine 67. Aspartate 172 functions as the Proton acceptor in the catalytic mechanism. Residues 338-369 (EEETDISHPISNSNTDSSTAISHNHSNDRKVG) form a disordered region. The segment covering 346–361 (PISNSNTDSSTAISHN) has biased composition (polar residues). 3 helical membrane-spanning segments follow: residues 400–420 (IMQI…FLNI), 425–445 (ICYL…FLLI), and 471–491 (LIIS…CCMV). The segment at 550–570 (VRRNHDDYYYDESSGPANEEN) is disordered.

Belongs to the protein kinase superfamily. Ser/Thr protein kinase family. As to expression, present in the intestinal cells from comma-stage embryos through the adult stage, although the intestinal expression is weaker after the L1 stage. Accumulates at the cell membrane of intestinal cells, especially the lateral membrane intervening the intestinal cells. Also detected in the muscles of the pharyngeal isthmus from the 3-fold embryonic stage, and in a pair of head neurons, which correspond to the AUA neurons, from the late L1 stage (at protein level).

It is found in the membrane. It carries out the reaction L-seryl-[protein] + ATP = O-phospho-L-seryl-[protein] + ADP + H(+). The catalysed reaction is L-threonyl-[protein] + ATP = O-phospho-L-threonyl-[protein] + ADP + H(+). In terms of biological role, probable serine-threonine protein kinase involved in the control of defecation rhythms. Required to increase the length of defecation cycle period. Acts in a cell-functional rather than developmental aspect in the regulation of defecation rhythms. Prevents preferential activation of the p38 MAPK pathway in response to the levels of vitamin B12 in different food types during larval development, thereby regulating the expression of cytoprotective genes, modulating life span and stress tolerance. This Caenorhabditis elegans protein is Serine/threonine-protein kinase flr-4 (flr-4).